The primary structure comprises 400 residues: Delta(12) fatty acid desaturase (400 aa).

The chain crosses the membrane as a helical span at residues 91–111; that stretch reads LAWPAYWIMQGIVCTGIWVLA. Residues 112 to 116 carry the Histidine box-1 motif; it reads HECGH. A Histidine box-2 motif is present at residues 148-152; it reads HSKHH. Helical transmembrane passes span 199 to 219, 245 to 265, and 277 to 297; these read IVTL…YLIM, FFDI…LIYA, and YYII…FLQH. A Histidine box-3 motif is present at residues 339–343; sequence HVAHH.

This sequence belongs to the fatty acid desaturase type 1 family.

The protein localises to the membrane. It catalyses the reaction (9Z)-octadecenoyl-CoA + 2 Fe(II)-[cytochrome b5] + O2 + 2 H(+) = (9Z,12Z)-octadecadienoyl-CoA + 2 Fe(III)-[cytochrome b5] + 2 H2O. The catalysed reaction is (9Z)-hexadecenoyl-CoA + 2 Fe(II)-[cytochrome b5] + O2 + 2 H(+) = (9Z,12Z)-hexadecadienoyl-CoA + 2 Fe(III)-[cytochrome b5] + 2 H2O. It functions in the pathway lipid metabolism; polyunsaturated fatty acid biosynthesis. Functionally, catalyzes the desaturation of oleic acid (Delta(9)-18:1) to linoleic acid (Delta(9), Delta(12)-18:2). The polypeptide is Delta(12) fatty acid desaturase (Mortierella isabellina (Filamentous fungus)).